We begin with the raw amino-acid sequence, 276 residues long: Elongation factor Ts (276 aa).

Residues 79–82 are involved in Mg(2+) ion dislocation from EF-Tu; the sequence is TDFV.

Belongs to the EF-Ts family.

The protein localises to the cytoplasm. Its function is as follows. Associates with the EF-Tu.GDP complex and induces the exchange of GDP to GTP. It remains bound to the aminoacyl-tRNA.EF-Tu.GTP complex up to the GTP hydrolysis stage on the ribosome. The chain is Elongation factor Ts from Buchnera aphidicola subsp. Cinara cedri (strain Cc).